The chain runs to 485 residues: Vacuolar fusion protein CCZ1 homolog (485 aa).

It belongs to the CCZ1 family. As to quaternary structure, component of the Mon1-Ccz1 guanyl-nucleotide exchange factor complex made up of Mon1, Ccz1 and Bulli; the interaction of Bulli with the Mon1-Ccz1 heterodimer is mediated via the C-terminal Mic1 domain of Bulli. Mon1 and Ccz1 form a stable complex which displays Rab7 GEF activity with or without Bulli; GEF activity is enhanced by Bulli possibly by improving membrane association of the complex. Interacts with Rab5 and Rab7; preferentially binds GTP-bound Rab5 and GDP-bound Rab7.

The protein localises to the cytoplasm. It localises to the cytosol. Its activity is regulated as follows. The Rab7 guanyl-nucleotide exchange factor (GEF) activity of the Mon1-Ccz1 complex is autoinhibited by the N-terminal disordered region of Mon1. GEF activity is stimulated by Rab5-mediated recruitment to membranes. Functionally, part of the Mon1-Ccz1 guanyl-nucleotide exchange factor complex specific for Rab7 that promotes the exchange of GDP to GTP, converting Rab7 from an inactive GDP-bound form into an active GTP-bound form. Required for recruitment of Rab7 to endosomal and autophagosomal membranes to mediate endolysosomal and autolysosomal vesicle maturation. Required for fusion of multivesicular bodies and lysosomes but not their formation or trafficking. Involved in the replacement of Rab5 (and possibly Rab4) with Rab7, also known as Rab conversion or the Rab cascade, during endosomal maturation. The Mon1-Ccz1 complex is recruited to phosphatidylinositol 3-phosphate (PtdIns[3]P) enriched membranes by Rab5, which stimulates recruitment and guanyl-nucleotide exchange of Rab7. Together with Rab7 required for autolysosome formation in fat cells and autophagic degradation during starvation-induced basal and developmental autophagy. This is Vacuolar fusion protein CCZ1 homolog from Drosophila melanogaster (Fruit fly).